The chain runs to 416 residues: Prostacyclin receptor (416 aa).

Over 1–45 (MVASGGRPDGPPSITPESPLIVGGREWQGMAGSCWNITYVQDSVG) the chain is Extracellular. 2 disulfides stabilise this stretch: Cys34–Cys194 and Cys121–Cys199. Asn36 is a glycosylation site (N-linked (GlcNAc...) asparagine). Residues 46–67 (PATSTLMFVAGVVGNGLALGIL) traverse the membrane as a helical segment. Residues 68-80 (GARRRSHPSAFAV) lie on the Cytoplasmic side of the membrane. The chain crosses the membrane as a helical span at residues 81–105 (LVTGLAVTDLLGTCFLSPAVFVAYA). Over 106–123 (RNSSLLGLAHGGTMLCDT) the chain is Extracellular. Residues 124–144 (FAFAMTFFGLASTLILFAMAV) form a helical membrane-spanning segment. The Cytoplasmic portion of the chain corresponds to 145–163 (ERCLALSHPYLYAQLDGPR). The helical transmembrane segment at 164-187 (CARLALPAIYAFCCLFCSLPLLGL) threads the bilayer. At 188 to 215 (GEHQQYCPGSWCFIRMRSPQPGGCAFSL) the chain is on the extracellular side. Residues 216-237 (AYASLMALLVTSIFFCNGSVTL) traverse the membrane as a helical segment. The Cytoplasmic segment spans residues 238-264 (SLCHMYRQQRRHHGSFVPTSRAREDEV). Residues 265–289 (YHLILLALMTGIMAVCSLPLTIRGF) form a helical membrane-spanning segment. The Extracellular portion of the chain corresponds to 290-302 (TQAIAPDSREMGD). The helical transmembrane segment at 303–323 (LHAFRFNAFNPILDPWVFILF) threads the bilayer. Residues 324 to 416 (RKAVFQRLKF…TEAVVACSLC (93 aa)) are Cytoplasmic-facing. The residue at position 366 (Ser366) is a Phosphoserine. Cys413 is modified (cysteine methyl ester). The S-farnesyl cysteine moiety is linked to residue Cys413. Positions 414 to 416 (SLC) are cleaved as a propeptide — removed in mature form.

The protein belongs to the G-protein coupled receptor 1 family. As to quaternary structure, interacts (non-isoprenylated C-terminus) with PDZK1. Isoprenylation does not influence ligand binding but is required for efficient coupling to the effectors adenylyl cyclase and phospholipase C.

The protein localises to the cell membrane. Receptor for prostacyclin (prostaglandin I2 or PGI2). The activity of this receptor is mediated by G(s) proteins which activate adenylate cyclase. In Rattus norvegicus (Rat), this protein is Prostacyclin receptor (Ptgir).